We begin with the raw amino-acid sequence, 118 residues long: Large ribosomal subunit protein bL19 (118 aa).

It belongs to the bacterial ribosomal protein bL19 family.

Functionally, this protein is located at the 30S-50S ribosomal subunit interface and may play a role in the structure and function of the aminoacyl-tRNA binding site. The polypeptide is Large ribosomal subunit protein bL19 (Campylobacter jejuni subsp. jejuni serotype O:6 (strain 81116 / NCTC 11828)).